Here is a 350-residue protein sequence, read N- to C-terminus: Bifunctional UDP-glucose 4-epimerase and UDP-xylose 4-epimerase 1 (350 aa).

Residues 15–17, 36–40, 67–68, Phe89, and Lys93 each bind NAD(+); these read GFI, DNFDN, and DL. A substrate-binding site is contributed by Ser133. The active-site Proton acceptor is Tyr157. Residues Lys161 and Tyr185 each coordinate NAD(+).

The protein belongs to the NAD(P)-dependent epimerase/dehydratase family. NAD(+) is required as a cofactor.

It catalyses the reaction UDP-alpha-D-glucose = UDP-alpha-D-galactose. It carries out the reaction UDP-beta-L-arabinopyranose = UDP-alpha-D-xylose. It participates in carbohydrate metabolism; galactose metabolism. It functions in the pathway nucleotide-sugar biosynthesis; UDP-L-arabinose biosynthesis; UDP-L-arabinose from UDP-alpha-D-xylose: step 1/1. The protein operates within cell wall biogenesis; cell wall polysaccharide biosynthesis. Its activity is regulated as follows. Inhibited by Hg(2+). In terms of biological role, catalyzes the interconversion between UDP-glucose and UDP-galactose and the interconversion between UDP-arabinose and UDP-xylose. The sequence is that of Bifunctional UDP-glucose 4-epimerase and UDP-xylose 4-epimerase 1 from Pisum sativum (Garden pea).